The chain runs to 433 residues: MPDYLGADQRKTKEDEKDDKPIRALDEGDIALLKTYGQSTYSRQIKQVEDDIQQLLKKINELTGIKESDTGLAPPALWDLAADKQTLQSEQPLQVARCTKIITADSEDPKYIINVKQFAKFVVDLSDQVAPTDIEEGMRVGVDRNKYQIHIPLPPKIDPTVTMMQVEEKPDVTYSDVGGCKEQIEKLREVVETPLLHPERFVNLGIEPPKGVLLFGPPGTGKTLCARAVANRTDACFIRVIGSELVQKYVGEGARMVRELFEMARTKKACLIFFDEIDAIGGARFDDGAGGDNEVQRTMLELINQLDGFDPRGNIKVLMATNRPDTLDPALMRPGRLDRKIEFSLPDLEGRTHILKIHARSMSVERDIRFELLARLCPNSTGAEIRSVCTEAGMFAIRARRKIATEKDFLEAVNKVIKSYAKFSATPRYMTYN.

Residues 1-22 (MPDYLGADQRKTKEDEKDDKPI) are disordered. Basic and acidic residues predominate over residues 8-22 (DQRKTKEDEKDDKPI). K116 is modified (N6-acetyllysine). 216-223 (GPPGTGKT) is a binding site for ATP. K422 is subject to N6-acetyllysine.

The protein belongs to the AAA ATPase family. Component of the 19S proteasome regulatory particle complex. The 26S proteasome consists of a 20S core particle (CP) and two 19S regulatory subunits (RP). The regulatory particle is made of a lid composed of 9 subunits, a base containing 6 ATPases including PSMC2 and few additional components. Interacts with NDC80/HEC; this interaction is detected only during M phase. Interacts and SQSTM1. Interacts with PAAF1. Directly interacts with TRIM5. Post-translationally, monoubiquitinated by RNF181. In terms of processing, phosphorylated. Dephosphorylated by UBLCP1 which impairs PSMC2 ATPase activity and disrupts 26S proteasome assembly.

It localises to the cytoplasm. The protein localises to the nucleus. Its function is as follows. Component of the 26S proteasome, a multiprotein complex involved in the ATP-dependent degradation of ubiquitinated proteins. This complex plays a key role in the maintenance of protein homeostasis by removing misfolded or damaged proteins, which could impair cellular functions, and by removing proteins whose functions are no longer required. Therefore, the proteasome participates in numerous cellular processes, including cell cycle progression, apoptosis, or DNA damage repair. PSMC2 belongs to the heterohexameric ring of AAA (ATPases associated with diverse cellular activities) proteins that unfolds ubiquitinated target proteins that are concurrently translocated into a proteolytic chamber and degraded into peptides. This is 26S proteasome regulatory subunit 7 (PSMC2) from Pongo abelii (Sumatran orangutan).